The primary structure comprises 403 residues: Glutamyl-tRNA reductase 2 (403 aa).

Residues 47–50 (TCHR), Ser-98, 103–105 (ETD), and Gln-109 each bind substrate. Cys-48 functions as the Nucleophile in the catalytic mechanism. 177–182 (GAGAVG) lines the NADP(+) pocket.

This sequence belongs to the glutamyl-tRNA reductase family. Homodimer.

The catalysed reaction is (S)-4-amino-5-oxopentanoate + tRNA(Glu) + NADP(+) = L-glutamyl-tRNA(Glu) + NADPH + H(+). It functions in the pathway porphyrin-containing compound metabolism; protoporphyrin-IX biosynthesis; 5-aminolevulinate from L-glutamyl-tRNA(Glu): step 1/2. Its function is as follows. Catalyzes the NADPH-dependent reduction of glutamyl-tRNA(Glu) to glutamate 1-semialdehyde (GSA). In Pyrobaculum arsenaticum (strain DSM 13514 / JCM 11321 / PZ6), this protein is Glutamyl-tRNA reductase 2.